A 616-amino-acid polypeptide reads, in one-letter code: Dihydroxy-acid dehydratase (616 aa).

Aspartate 81 contacts Mg(2+). Cysteine 122 is a [2Fe-2S] cluster binding site. Mg(2+) is bound by residues aspartate 123 and lysine 124. Lysine 124 carries the post-translational modification N6-carboxylysine. [2Fe-2S] cluster is bound at residue cysteine 195. Glutamate 491 is a binding site for Mg(2+). Residue serine 517 is the Proton acceptor of the active site.

The protein belongs to the IlvD/Edd family. Homodimer. It depends on [2Fe-2S] cluster as a cofactor. Mg(2+) is required as a cofactor.

The enzyme catalyses (2R)-2,3-dihydroxy-3-methylbutanoate = 3-methyl-2-oxobutanoate + H2O. It catalyses the reaction (2R,3R)-2,3-dihydroxy-3-methylpentanoate = (S)-3-methyl-2-oxopentanoate + H2O. It functions in the pathway amino-acid biosynthesis; L-isoleucine biosynthesis; L-isoleucine from 2-oxobutanoate: step 3/4. It participates in amino-acid biosynthesis; L-valine biosynthesis; L-valine from pyruvate: step 3/4. Its function is as follows. Functions in the biosynthesis of branched-chain amino acids. Catalyzes the dehydration of (2R,3R)-2,3-dihydroxy-3-methylpentanoate (2,3-dihydroxy-3-methylvalerate) into 2-oxo-3-methylpentanoate (2-oxo-3-methylvalerate) and of (2R)-2,3-dihydroxy-3-methylbutanoate (2,3-dihydroxyisovalerate) into 2-oxo-3-methylbutanoate (2-oxoisovalerate), the penultimate precursor to L-isoleucine and L-valine, respectively. This Yersinia pseudotuberculosis serotype O:1b (strain IP 31758) protein is Dihydroxy-acid dehydratase.